The primary structure comprises 81 residues: Photosystem I iron-sulfur center (81 aa).

4Fe-4S ferredoxin-type domains lie at 1–31 (MAHSVKIYDTCIGCTQCVRACPTDVLEMVPW) and 39–68 (IASAPRTEDCVGCKRCESACPTDYLSVRVY). The [4Fe-4S] cluster site is built by C11, C14, C17, C21, C48, C51, C54, and C58.

As to quaternary structure, the eukaryotic PSI reaction center is composed of at least 11 subunits. [4Fe-4S] cluster is required as a cofactor.

Its subcellular location is the plastid. The protein resides in the chloroplast thylakoid membrane. The catalysed reaction is reduced [plastocyanin] + hnu + oxidized [2Fe-2S]-[ferredoxin] = oxidized [plastocyanin] + reduced [2Fe-2S]-[ferredoxin]. In terms of biological role, apoprotein for the two 4Fe-4S centers FA and FB of photosystem I (PSI); essential for photochemical activity. FB is the terminal electron acceptor of PSI, donating electrons to ferredoxin. The C-terminus interacts with PsaA/B/D and helps assemble the protein into the PSI complex. Required for binding of PsaD and PsaE to PSI. PSI is a plastocyanin-ferredoxin oxidoreductase, converting photonic excitation into a charge separation, which transfers an electron from the donor P700 chlorophyll pair to the spectroscopically characterized acceptors A0, A1, FX, FA and FB in turn. In Welwitschia mirabilis (Tree tumbo), this protein is Photosystem I iron-sulfur center.